A 561-amino-acid chain; its full sequence is DNA ligase (561 aa).

An ATP-binding site is contributed by glutamate 249. Lysine 251 (N6-AMP-lysine intermediate) is an active-site residue. 6 residues coordinate ATP: arginine 256, arginine 271, glutamate 301, phenylalanine 340, arginine 417, and lysine 423.

This sequence belongs to the ATP-dependent DNA ligase family. Requires Mg(2+) as cofactor.

It carries out the reaction ATP + (deoxyribonucleotide)n-3'-hydroxyl + 5'-phospho-(deoxyribonucleotide)m = (deoxyribonucleotide)n+m + AMP + diphosphate.. In terms of biological role, DNA ligase that seals nicks in double-stranded DNA during DNA replication, DNA recombination and DNA repair. In Methanothermobacter thermautotrophicus (strain ATCC 29096 / DSM 1053 / JCM 10044 / NBRC 100330 / Delta H) (Methanobacterium thermoautotrophicum), this protein is DNA ligase.